We begin with the raw amino-acid sequence, 395 residues long: MKFFNNLFKKESKITVASGSKRVRISNSFLMFSNLYEAKKPLKYVLVYLLSIINAFLLLIFIQKTGLYSFGISSLTQGFARLVFVLLKSFDETQRLLIFNILYWLLYVFINIPLIIFSYKKIGKNFTILSTHFVVASNVFGFLISIIPGSDNLPPMLASITDTNFWKAAKDLNQSAGFVPFLWSDTSQGNVIISTFIYAAIYGFYNGISVSLLYILGGSAGGADFLTQYYARKKNRSVGSILFYVNSFILIIAILIGSFVAGSLLLQDVNNYRDSAWEVSLFFSPNLIATFFSILLTGTVVSYLFPRYNFAEIKVFTDKLEEVRKALLSDNANHSLSIQETLGGYSLLKKKMIVSVSMYVEIPHLIKIIRQIDKDCLVSITRIRGIDGHIYLRQN.

Transmembrane regions (helical) follow at residues 42 to 62 (LKYV…LIFI), 67 to 87 (LYSF…FVLL), 97 to 117 (LIFN…LIIF), 128 to 148 (ILST…SIIP), 196 to 216 (FIYA…LYIL), 241 to 261 (ILFY…SFVA), and 281 to 301 (LFFS…GTVV).

It is found in the cell membrane. This is an uncharacterized protein from Mycoplasma genitalium (strain ATCC 33530 / DSM 19775 / NCTC 10195 / G37) (Mycoplasmoides genitalium).